A 428-amino-acid polypeptide reads, in one-letter code: Type II methyltransferase M.BanI (428 aa).

Residues 3–417 (IKFVDLFAGI…EDLFQNNVNE (415 aa)) form the SAM-dependent MTase C5-type domain. Cysteine 76 is a catalytic residue.

This sequence belongs to the class I-like SAM-binding methyltransferase superfamily. C5-methyltransferase family. As to quaternary structure, monomer.

The enzyme catalyses a 2'-deoxycytidine in DNA + S-adenosyl-L-methionine = a 5-methyl-2'-deoxycytidine in DNA + S-adenosyl-L-homocysteine + H(+). Functionally, a methylase, recognizes the double-stranded sequence 5'-GGYRCC-3', methylates C-4 on both strands, and protects the DNA from cleavage by the BanI endonuclease. This chain is Type II methyltransferase M.BanI (banIM), found in Aneurinibacillus aneurinilyticus (Bacillus aneurinolyticus).